The following is a 605-amino-acid chain: Glucose oxidase (605 aa).

The first 18 residues, 1–18, serve as a signal peptide directing secretion; the sequence is MVSVFLSTLLLAAATVQA. FAD-binding residues include Leu52, Thr53, and Glu73. Asn111 carries an N-linked (GlcNAc...) asparagine glycan. Residues Ser125, Asn129, Gly130, and Ser132 each contribute to the FAD site. N-linked (GlcNAc...) asparagine glycosylation is found at Asn183 and Asn190. Cys186 and Cys228 form a disulfide bridge. Val272 serves as a coordination point for FAD. 4 N-linked (GlcNAc...) asparagine glycosylation sites follow: Asn335, Asn375, Asn410, and Asn519. Catalysis depends on His538, which acts as the Proton acceptor. O2-binding residues include Lys559 and Val560. FAD is bound by residues Gly571 and Met583.

This sequence belongs to the GMC oxidoreductase family. As to quaternary structure, homodimer. FAD is required as a cofactor.

It is found in the secreted. It localises to the cell wall. Its subcellular location is the cytoplasmic vesicle. It carries out the reaction beta-D-glucose + O2 = D-glucono-1,5-lactone + H2O2. Glucose oxidase catalyzes the oxidation of beta-D-glucose to D-glucono-delta-lactone and hydrogen peroxide in the presence of molecular oxygen. D-glucono-delta-lactone is sequentially hydrolyzed by lactonase to D-gluconic acid, and the resulting hydrogen peroxide is hydrolyzed by catalase to oxygen and water. Glucose oxidase alone indirectly causes toxicity in the presence of glucose and is the active compound of the antifungal antibiotic talaron. Responsible for inhibition of germination of microsclerotia of Verticillium dahliae. In Talaromyces flavus, this protein is Glucose oxidase.